A 170-amino-acid polypeptide reads, in one-letter code: Photosystem I assembly protein Ycf3 (170 aa).

TPR repeat units lie at residues 35–68, 72–105, and 120–153; these read AFTYYRDGMSAQAEGEYAEALQNYYEAMRLEVDA, SYILYNIGLIHTSNGEHGRALEYYYQALERNPSL, and GEQAIENGQSEISQILFEKAADYWKEAIRLAPTN.

Belongs to the Ycf3 family.

Its subcellular location is the plastid. It localises to the chloroplast thylakoid membrane. Functionally, essential for the assembly of the photosystem I (PSI) complex. May act as a chaperone-like factor to guide the assembly of the PSI subunits. This chain is Photosystem I assembly protein Ycf3, found in Tetradesmus obliquus (Green alga).